The chain runs to 221 residues: Protein GrpE (221 aa).

Residues 1–83 (MEQEQKATQE…AKNCRTRSED (83 aa)) form a disordered region. Residues 23–32 (QEEKAEERGG) are compositionally biased toward basic and acidic residues. The span at 41–53 (ENLQQENTQAQQE) shows a compositional bias: low complexity.

This sequence belongs to the GrpE family. As to quaternary structure, homodimer.

It is found in the cytoplasm. Its function is as follows. Participates actively in the response to hyperosmotic and heat shock by preventing the aggregation of stress-denatured proteins, in association with DnaK and GrpE. It is the nucleotide exchange factor for DnaK and may function as a thermosensor. Unfolded proteins bind initially to DnaJ; upon interaction with the DnaJ-bound protein, DnaK hydrolyzes its bound ATP, resulting in the formation of a stable complex. GrpE releases ADP from DnaK; ATP binding to DnaK triggers the release of the substrate protein, thus completing the reaction cycle. Several rounds of ATP-dependent interactions between DnaJ, DnaK and GrpE are required for fully efficient folding. In Geobacillus stearothermophilus (Bacillus stearothermophilus), this protein is Protein GrpE.